We begin with the raw amino-acid sequence, 1226 residues long: Polyamine-transporting ATPase 13A3 (1226 aa).

The Cytoplasmic segment spans residues 1-28; sequence MDREERKTINQGQEDEMEIYGYNLSRWK. Residues 29–49 lie within the membrane without spanning it; that stretch reads LAIVSLGVICSGGFLLLLLYW. At 50-205 the chain is on the cytoplasmic side; the sequence is MPEWRVKATC…IAVKVPSVFK (156 aa). The residue at position 98 (serine 98) is a Phosphoserine. The chain crosses the membrane as a helical span at residues 206 to 226; sequence LLIKEVLNPFYIFQLFSVILW. At 227 to 232 the chain is on the lumenal side; it reads STDEYY. Residues 233-253 form a helical membrane-spanning segment; it reads YYALAIVVMSIVSIVSSLYSI. Over 254–409 the chain is Cytoplasmic; the sequence is RKQYVMLHDM…KPTDFKLYRD (156 aa). Residues 410–430 traverse the membrane as a helical segment; that stretch reads AYLFLLCLVAVAGIGFIYTII. At 431 to 448 the chain is on the lumenal side; it reads NSILNEVQVGVIIIESLD. Residues 449 to 469 form a helical membrane-spanning segment; the sequence is IITITVPPALPAAMTAGIVYA. At 470–940 the chain is on the cytoplasmic side; it reads QRRLKKIGIF…ALITSFCVFK (471 aa). Residue aspartate 498 is the 4-aspartylphosphate intermediate of the active site. Aspartate 498 and threonine 500 together coordinate Mg(2+). Residues 498-500, phenylalanine 628, arginine 684, and aspartate 750 each bind ATP; that span reads DKT. Serine 817 is modified (phosphoserine). Aspartate 883 and aspartate 887 together coordinate Mg(2+). 883–887 provides a ligand contact to ATP; sequence DGAND. The chain crosses the membrane as a helical span at residues 941–961; it reads FMALYSIIQYFSVTLLYSILS. Asparagine 962 is a topological domain (lumenal). Residues 963-983 form a helical membrane-spanning segment; it reads LGDFQFLFIDLAIILVVVFTM. Residues 984–999 lie on the Cytoplasmic side of the membrane; sequence SLNPAWKELVAQRPPS. Residues 1000–1020 traverse the membrane as a helical segment; the sequence is GLISGALLFSVLSQIIICIGF. Residues 1021–1073 are Lumenal-facing; that stretch reads QSLGFFWVKQQPWYEVWHPKSDACNTTGSGFWNSSHVDNETELDEHNIQNYEN. Residues 1074-1094 traverse the membrane as a helical segment; it reads TTVFFISSFQYLIVAIAFSKG. Over 1095–1105 the chain is Cytoplasmic; sequence KPFRQPCYKNY. Residues 1106 to 1126 form a helical membrane-spanning segment; it reads FFVFSVIFLYIFILFIMLYPV. Over 1127–1143 the chain is Lumenal; sequence ASVDQVLQIVCVPYQWR. A helical transmembrane segment spans residues 1144 to 1164; that stretch reads VTMLIIVLVNAFVSITVEESV. Residues 1165–1226 are Cytoplasmic-facing; it reads DRWGKCCLPW…NGSCQIITIT (62 aa).

Belongs to the cation transport ATPase (P-type) (TC 3.A.3) family. Type V subfamily. In terms of tissue distribution, broadly expressed.

The protein resides in the recycling endosome membrane. It localises to the early endosome membrane. Its subcellular location is the late endosome membrane. The enzyme catalyses putrescine(out) + ATP + H2O = putrescine(in) + ADP + phosphate + H(+). Functionally, ATP-driven pump involved in endocytosis-dependent polyamine transport. Uses ATP as an energy source to transfer polyamine precursor putrescine from the endosomal compartment to the cytosol. The sequence is that of Polyamine-transporting ATPase 13A3 from Homo sapiens (Human).